Consider the following 75-residue polypeptide: Large ribosomal subunit protein bL32c (75 aa).

Positions 49–75 are disordered; that stretch reads SPGPTTPIKPNPKKQTGRRPRSQRRRT. Basic residues predominate over residues 59–75; sequence NPKKQTGRRPRSQRRRT.

It belongs to the bacterial ribosomal protein bL32 family.

It is found in the plastid. The protein resides in the chloroplast. This is Large ribosomal subunit protein bL32c from Nephroselmis olivacea (Green alga).